Here is a 60-residue protein sequence, read N- to C-terminus: Large ribosomal subunit protein bL32 (60 aa).

Residues 1–60 (MAVQQNKKSPSKRGMHRSHDFLVNPPTAIEPTTGESHLRHHISPNGFYRGRKILKTKADE) form a disordered region. The span at 49–60 (RGRKILKTKADE) shows a compositional bias: basic residues.

It belongs to the bacterial ribosomal protein bL32 family.

The protein is Large ribosomal subunit protein bL32 of Bordetella avium (strain 197N).